The following is a 110-amino-acid chain: Protein C-ets-2 (110 aa).

Positions 1–84 (SGPIQLWQFL…AGKRYVYRFV (84 aa)) form a DNA-binding region, ETS.

This sequence belongs to the ETS family.

It is found in the nucleus. Probable transcription factor. The sequence is that of Protein C-ets-2 (ETS-2) from Lytechinus variegatus (Green sea urchin).